The following is a 319-amino-acid chain: Acetyl-coenzyme A carboxylase carboxyl transferase subunit alpha (319 aa).

The region spanning 35-296 (DLDKEIEQLE…KDMLVKQLEE (262 aa)) is the CoA carboxyltransferase C-terminal domain.

The protein belongs to the AccA family. Acetyl-CoA carboxylase is a heterohexamer composed of biotin carboxyl carrier protein (AccB), biotin carboxylase (AccC) and two subunits each of ACCase subunit alpha (AccA) and ACCase subunit beta (AccD).

The protein resides in the cytoplasm. It catalyses the reaction N(6)-carboxybiotinyl-L-lysyl-[protein] + acetyl-CoA = N(6)-biotinyl-L-lysyl-[protein] + malonyl-CoA. It functions in the pathway lipid metabolism; malonyl-CoA biosynthesis; malonyl-CoA from acetyl-CoA: step 1/1. Its function is as follows. Component of the acetyl coenzyme A carboxylase (ACC) complex. First, biotin carboxylase catalyzes the carboxylation of biotin on its carrier protein (BCCP) and then the CO(2) group is transferred by the carboxyltransferase to acetyl-CoA to form malonyl-CoA. This is Acetyl-coenzyme A carboxylase carboxyl transferase subunit alpha from Vibrio atlanticus (strain LGP32) (Vibrio splendidus (strain Mel32)).